Here is a 93-residue protein sequence, read N- to C-terminus: MQNRKWILTSLVMTFFGIPILAQFLAVVIAMLGVGLAGIIEVCNILITPTIYLLLKIFMLALGALMLFFSGRVGNVPEFCYVGYDGVGFAVIP.

The sequence is that of Protein YzgL (yzgL) from Escherichia coli (strain K12).